The chain runs to 427 residues: Interleukin-13 receptor subunit alpha-1 (427 aa).

A signal peptide spans 1-21 (MEWPARLCGLWALLLCAGGGG). Topologically, residues 22-343 (GGGGAAPTET…MSIGKKRNST (322 aa)) are extracellular. 3 Fibronectin type-III domains span residues 34–123 (PVTN…PPEG), 128–226 (AVTE…TSRV), and 227–339 (KPDP…IGKK). Residues Asn-37 and Asn-61 are each glycosylated (N-linked (GlcNAc...) asparagine). 3 disulfide bridges follow: Cys-62–Cys-102, Cys-95–Cys-117, and Cys-134–Cys-144. N-linked (GlcNAc...) asparagine glycosylation is found at Asn-105, Asn-138, and Asn-157. A disulfide bridge connects residues Cys-173 and Cys-185. Asn-235, Asn-265, Asn-293, Asn-329, and Asn-341 each carry an N-linked (GlcNAc...) asparagine glycan. 2 disulfides stabilise this stretch: Cys-257–Cys-320 and Cys-282–Cys-296. A WSXWS motif motif is present at residues 327-331 (WSNWS). The helical transmembrane segment at 344 to 367 (LYITMLLIVPVIVAGAIIVLLLYL) threads the bilayer. Over 368–427 (KRLKIIIFPPIPDPGKIFKEMFGDQNDDTLHWKKYDIYEKQTKEETDSVVLIENLKKASQ) the chain is Cytoplasmic. Positions 374–382 (IFPPIPDPG) match the Box 1 motif motif.

Belongs to the type I cytokine receptor family. Type 5 subfamily. As to quaternary structure, interleukin-13 receptor is a complex of IL4R, IL13RA1, and possibly other components. Interacts with TRAF3IP1. Interacts with IL4. In terms of tissue distribution, ubiquitous. Highest levels in heart, liver, skeletal muscle and ovary; lowest levels in brain, lung and kidney. Also found in B-cells, T-cells and endothelial cells.

Its subcellular location is the membrane. Its function is as follows. Binds with low affinity to interleukin-13 (IL13). Together with IL4RA can form a functional receptor for IL13. Also serves as an alternate accessory protein to the common cytokine receptor gamma chain for interleukin-4 (IL4) signaling, but cannot replace the function of IL2RG in allowing enhanced interleukin-2 (IL2) binding activity. This chain is Interleukin-13 receptor subunit alpha-1 (IL13RA1), found in Homo sapiens (Human).